The primary structure comprises 435 residues: Aspartate--tRNA(Asp/Asn) ligase (435 aa).

Glu-163 serves as a coordination point for L-aspartate. The interval 185-188 (QLYK) is aspartate. Arg-206 contacts L-aspartate. Residues 206–208 (RAE), 214–216 (RHL), and Glu-358 contribute to the ATP site. L-aspartate-binding residues include Ser-361 and Arg-365. An ATP-binding site is contributed by 406 to 409 (GAER).

The protein belongs to the class-II aminoacyl-tRNA synthetase family. Type 2 subfamily. As to quaternary structure, homodimer.

It is found in the cytoplasm. The enzyme catalyses tRNA(Asx) + L-aspartate + ATP = L-aspartyl-tRNA(Asx) + AMP + diphosphate. Aspartyl-tRNA synthetase with relaxed tRNA specificity since it is able to aspartylate not only its cognate tRNA(Asp) but also tRNA(Asn). Reaction proceeds in two steps: L-aspartate is first activated by ATP to form Asp-AMP and then transferred to the acceptor end of tRNA(Asp/Asn). Is slightly more efficient at aminoacylating tRNA(Asn) over tRNA(Asp). The chain is Aspartate--tRNA(Asp/Asn) ligase (aspS2) from Deinococcus radiodurans (strain ATCC 13939 / DSM 20539 / JCM 16871 / CCUG 27074 / LMG 4051 / NBRC 15346 / NCIMB 9279 / VKM B-1422 / R1).